Here is a 51-residue protein sequence, read N- to C-terminus: Putative protein LomR (51 aa).

This sequence belongs to the outer membrane OOP (TC 1.B.6) superfamily. Ail family.

This Escherichia coli (strain K12) protein is Putative protein LomR (lomR).